We begin with the raw amino-acid sequence, 297 residues long: Ribosomal RNA small subunit methyltransferase H (297 aa).

S-adenosyl-L-methionine contacts are provided by residues G37–H39, E56, F87, D102, and H109.

The protein belongs to the methyltransferase superfamily. RsmH family.

It is found in the cytoplasm. The enzyme catalyses cytidine(1402) in 16S rRNA + S-adenosyl-L-methionine = N(4)-methylcytidine(1402) in 16S rRNA + S-adenosyl-L-homocysteine + H(+). Functionally, specifically methylates the N4 position of cytidine in position 1402 (C1402) of 16S rRNA. The protein is Ribosomal RNA small subunit methyltransferase H of Borrelia recurrentis (strain A1).